Consider the following 437-residue polypeptide: Integrase (437 aa).

One can recognise a Core-binding (CB) domain in the interval 73 to 158 (WTVERWLTHW…TARTAFGEAY (86 aa)). In terms of domain architecture, Tyr recombinase spans 179–428 (EEVEPLEVED…DSVRNDVADR (250 aa)). Active-site residues include Arg214, Lys245, His379, Arg382, and Trp405. The active-site O-(3'-phospho-DNA)-tyrosine intermediate is the Tyr414.

This sequence belongs to the 'phage' integrase family.

Functionally, is a recombinase (or integrase), catalyzing the cutting and rejoining of the recombining DNA molecules. This Saccharopolyspora erythraea (Streptomyces erythraeus) protein is Integrase (int).